Here is a 487-residue protein sequence, read N- to C-terminus: Glycogen synthase (487 aa).

Residue lysine 23 participates in ADP-alpha-D-glucose binding.

Belongs to the glycosyltransferase 1 family. Bacterial/plant glycogen synthase subfamily.

The enzyme catalyses [(1-&gt;4)-alpha-D-glucosyl](n) + ADP-alpha-D-glucose = [(1-&gt;4)-alpha-D-glucosyl](n+1) + ADP + H(+). The protein operates within glycan biosynthesis; glycogen biosynthesis. Its function is as follows. Synthesizes alpha-1,4-glucan chains using ADP-glucose. This is Glycogen synthase from Pseudomonas fluorescens (strain Pf0-1).